A 319-amino-acid chain; its full sequence is Ribose-phosphate pyrophosphokinase (319 aa).

ATP is bound by residues 40–42 and 99–100; these read DGE and RQ. Residues His-134 and Asp-174 each coordinate Mg(2+). Lys-198 is an active-site residue. D-ribose 5-phosphate contacts are provided by residues Arg-200, Asp-224, and 228–232; that span reads DTAGT.

This sequence belongs to the ribose-phosphate pyrophosphokinase family. Class I subfamily. In terms of assembly, homohexamer. Mg(2+) serves as cofactor.

The protein localises to the cytoplasm. The enzyme catalyses D-ribose 5-phosphate + ATP = 5-phospho-alpha-D-ribose 1-diphosphate + AMP + H(+). It participates in metabolic intermediate biosynthesis; 5-phospho-alpha-D-ribose 1-diphosphate biosynthesis; 5-phospho-alpha-D-ribose 1-diphosphate from D-ribose 5-phosphate (route I): step 1/1. Involved in the biosynthesis of the central metabolite phospho-alpha-D-ribosyl-1-pyrophosphate (PRPP) via the transfer of pyrophosphoryl group from ATP to 1-hydroxyl of ribose-5-phosphate (Rib-5-P). This Xanthomonas axonopodis pv. citri (strain 306) protein is Ribose-phosphate pyrophosphokinase.